We begin with the raw amino-acid sequence, 881 residues long: MNTTTVSLERPNVHERRRENVATDINVNALVKNASKAIAPLWPIATFVARHPWMGLEHFSFEQVVHRLKLLRDIDLYPSMAMFRAAQRKGELNPKFLEMRLQRWLDEQPLTMPREEAERFCRAALLHEEIPNELLTSSSLKSLAAKMKDMRLRYDSNHLLTRPLSLLLEEQGKEKWARVLDHQMIKWCKLFLDESQALWAMPYREKGFYYAWRKLVINDPSLNKQQRERLKDLPHDPEEALRQALMLLGIPHGEMKGYLEAHLLSLPGWAGMLLWRSQQSGQAHLLLVDYLAIRLSLEWALIAPHLPFAKQKDDDEAFLLPLLAAWMHWGGWTPEKWLQLPQAEQQARLSFAYRFDKIVRGKLWLEAWEDTQEAQLKKRIASHSQNNEPKQAVAQLIFCMDVRSEPFRRHLEQAGPFETYGCAGFFGLPIKTRELDSSHAHASCPVIVEPRHEVQEFTSAENVKKYRGRRNALLSVSHTFKKMKQHLFASLLLPEVSGPLLGLHTLARSIAPSGAGRVFHQFQDNWAQKPATELSLNRESSLETTETTDLPVGFSTEEKVRYVYQLFKGMGLTSRFAPLVVVCGHESTTTNNPYASSLDCGACGGAAGGFNARVFAALCNLKEVREGLAKEGIVIPEDTVFVAAEHMTTVDDLCWLYVPTLSEAAQKAFDMLQGKLEEVSRNANNERLSKLPGLEGKKKDPLAEAHRRAEDWSEIRPEWGLAGNAALIIGRRELTKHCNLEGRVFLHSYDWRKDPSGEALANIITGPVTVAQWINLQYYASTVAPHYYGSGNKTTQTVTAGIGVMQGNASDLLAGLPWQSVMASDEEIFHSPLRLLVIIEAPQQNIERLFEDDPHFRRKVKNGWLRLVSIDPDSGEWKAWR.

4 residues coordinate Zn(2+): Cys399, Asp401, His585, and Cys600.

This sequence belongs to the inorganic carbon transporter (TC 9.A.2) DabA family. Forms a complex with DabB. Requires Zn(2+) as cofactor.

Its subcellular location is the cell membrane. Its function is as follows. Part of an energy-coupled inorganic carbon pump. In Geobacillus sp. (strain WCH70), this protein is Probable inorganic carbon transporter subunit DabA.